The chain runs to 400 residues: uncharacterized protein (400 aa).

36-43 (GSINSGKT) lines the ATP pocket.

This sequence belongs to the archaeal ATPase family.

This is an uncharacterized protein from Methanocaldococcus jannaschii (strain ATCC 43067 / DSM 2661 / JAL-1 / JCM 10045 / NBRC 100440) (Methanococcus jannaschii).